The following is an 867-amino-acid chain: DNA mismatch repair protein MutS (867 aa).

Gly-606–Ser-613 provides a ligand contact to ATP.

Belongs to the DNA mismatch repair MutS family.

Its function is as follows. This protein is involved in the repair of mismatches in DNA. It is possible that it carries out the mismatch recognition step. This protein has a weak ATPase activity. The polypeptide is DNA mismatch repair protein MutS (Oceanobacillus iheyensis (strain DSM 14371 / CIP 107618 / JCM 11309 / KCTC 3954 / HTE831)).